A 60-amino-acid polypeptide reads, in one-letter code: MTKEIKVKVQLVRSPIGTQESHRATVRGLGLRGVNSVSELQDTPAVRGMINKISYLVKVI.

This sequence belongs to the universal ribosomal protein uL30 family. In terms of assembly, part of the 50S ribosomal subunit.

This Polaromonas naphthalenivorans (strain CJ2) protein is Large ribosomal subunit protein uL30.